The chain runs to 549 residues: Glucose-6-phosphate isomerase (549 aa).

The Proton donor role is filled by E355. Residues H386 and K514 contribute to the active site.

The protein belongs to the GPI family.

The protein resides in the cytoplasm. The catalysed reaction is alpha-D-glucose 6-phosphate = beta-D-fructose 6-phosphate. It functions in the pathway carbohydrate biosynthesis; gluconeogenesis. Its pathway is carbohydrate degradation; glycolysis; D-glyceraldehyde 3-phosphate and glycerone phosphate from D-glucose: step 2/4. In terms of biological role, catalyzes the reversible isomerization of glucose-6-phosphate to fructose-6-phosphate. The polypeptide is Glucose-6-phosphate isomerase (Salmonella enteritidis PT4 (strain P125109)).